The following is an 85-amino-acid chain: Small ribosomal subunit protein bS20 (85 aa).

Disordered regions lie at residues 1 to 25 and 62 to 85; these read MANIKSAIKRAKLSEERRAHNASIK and ARKGLIHQNAASRQKSRLAKQVNA.

This sequence belongs to the bacterial ribosomal protein bS20 family.

In terms of biological role, binds directly to 16S ribosomal RNA. This chain is Small ribosomal subunit protein bS20, found in Bacillus cereus (strain G9842).